The chain runs to 650 residues: Putative pumilio homolog 7, chloroplastic (650 aa).

2 disordered regions span residues Met1–Leu22 and Asn200–Ile235. Residues Met1 to Lys77 constitute a chloroplast transit peptide. Low complexity-rich tracts occupy residues Ser8–Leu22 and Pro217–Gly232. Residues Ser308–Lys650 enclose the PUM-HD domain. 8 Pumilio repeats span residues Asp333–Asn368, Glu369–Leu404, Glu408–Lys443, Ala445–Asp480, Ala481–Ala516, Glu517–Ala552, Gln553–Ser591, and His594–Glu625.

The protein resides in the plastid. Its subcellular location is the chloroplast. It is found in the cytoplasm. Functionally, sequence-specific RNA-binding protein that regulates translation and mRNA stability by binding the 3'-UTR of target mRNAs. In Arabidopsis thaliana (Mouse-ear cress), this protein is Putative pumilio homolog 7, chloroplastic (APUM7).